Consider the following 155-residue polypeptide: Transcriptional repressor NrdR (155 aa).

Residues methionine 1–serine 10 are compositionally biased toward basic residues. Residues methionine 1 to glycine 21 form a disordered region. The segment at cysteine 3–cysteine 34 is a zinc-finger region. In terms of domain architecture, ATP-cone spans leucine 49–valine 139.

It belongs to the NrdR family. It depends on Zn(2+) as a cofactor.

In terms of biological role, negatively regulates transcription of bacterial ribonucleotide reductase nrd genes and operons by binding to NrdR-boxes. The protein is Transcriptional repressor NrdR of Lacticaseibacillus casei (strain BL23) (Lactobacillus casei).